A 118-amino-acid chain; its full sequence is Cytochrome b-c1 complex subunit 7 (118 aa).

Positions 1–32 are igE-binding. Immunodominant epitope; induces specific IgE antibody production in mice. Causes degranulation of rat basophilic leukemia (RBL) cells and the release of beta-hexosaminidase from them; that stretch reads MVHLTKTLRFINNPGFRKFYYGLQGYNKYGLY.

This sequence belongs to the UQCRB/QCR7 family. Component of the ubiquinol-cytochrome c oxidoreductase (cytochrome b-c1 complex, complex III, CIII), a multisubunit enzyme composed of 3 respiratory subunits cytochrome b, cytochrome c1 and Rieske protein, 2 core protein subunits, and additional low-molecular weight protein subunits. The complex exists as an obligatory dimer and forms supercomplexes (SCs) in the inner mitochondrial membrane with cytochrome c oxidase (complex IV, CIV).

It localises to the mitochondrion inner membrane. In terms of biological role, component of the ubiquinol-cytochrome c oxidoreductase, a multisubunit transmembrane complex that is part of the mitochondrial electron transport chain which drives oxidative phosphorylation. The respiratory chain contains 3 multisubunit complexes succinate dehydrogenase (complex II, CII), ubiquinol-cytochrome c oxidoreductase (cytochrome b-c1 complex, complex III, CIII) and cytochrome c oxidase (complex IV, CIV), that cooperate to transfer electrons derived from NADH and succinate to molecular oxygen, creating an electrochemical gradient over the inner membrane that drives transmembrane transport and the ATP synthase. The cytochrome b-c1 complex catalyzes electron transfer from ubiquinol to cytochrome c, linking this redox reaction to translocation of protons across the mitochondrial inner membrane, with protons being carried across the membrane as hydrogens on the quinol. In the process called Q cycle, 2 protons are consumed from the matrix, 4 protons are released into the intermembrane space and 2 electrons are passed to cytochrome c. The chain is Cytochrome b-c1 complex subunit 7 from Dermatophagoides farinae (American house dust mite).